The primary structure comprises 299 residues: Tyrosine recombinase XerC (299 aa).

A Core-binding (CB) domain is found at 1–81 (MDEAIRRFIE…SWRQFYHWLQ (81 aa)). In terms of domain architecture, Tyr recombinase spans 102-281 (LLPKALPVDG…DFQHLAKVYD (180 aa)). Catalysis depends on residues arginine 142, lysine 166, histidine 233, arginine 236, and histidine 259. Tyrosine 268 serves as the catalytic O-(3'-phospho-DNA)-tyrosine intermediate.

It belongs to the 'phage' integrase family. XerC subfamily. In terms of assembly, forms a cyclic heterotetrameric complex composed of two molecules of XerC and two molecules of XerD.

It is found in the cytoplasm. Site-specific tyrosine recombinase, which acts by catalyzing the cutting and rejoining of the recombining DNA molecules. The XerC-XerD complex is essential to convert dimers of the bacterial chromosome into monomers to permit their segregation at cell division. It also contributes to the segregational stability of plasmids. In Chromobacterium violaceum (strain ATCC 12472 / DSM 30191 / JCM 1249 / CCUG 213 / NBRC 12614 / NCIMB 9131 / NCTC 9757 / MK), this protein is Tyrosine recombinase XerC.